The chain runs to 846 residues: MPSRNSNVLQRPTYAQLASTSVKSSKGLVSYQDWVVDVKASISAISVNKSRTKVGVAGRELLKVLAVNPNSSKPPVCISDLLQKSTQTKHISCNDVKWGSSFASNLIFTCSPLGNLNVWDVNLEALLYDFNEHSRAVHKLDISSFHPSYVLTASQDGLIKLWDYKESSSTITFRGNSEAARDVVFSPSEPNEFVAAYDSGILQKWDIRFPKLPFLKLAAHNGVVLCVNYSPNGVFLASCGRDKTIRIWDSTSNKKKSLITINNVSPLNCVRWRPANQQSRGSNQLASSSLVGDTAINVWDITRPYIPYRTVSCHDSIVSTMHWASTELLWSCSKDGIFSQTRVENAFNCIDMLPRATSSWSTKNSLVFSSNPISNQRLSSLNRVASFESNISSLKSALYASQNSDGSTSNPVPFVPHNFVGIPQELGILAYRSEDVAQFCYLAKNYRISGDISSACKENAFFARNVGAEFAYQIWDALYFSLGVLNNSDKGISELINIPFVSANNSMADDEKGRNLKNLTQISTSSTPAHDNLSLNDFFEPREASTPSESSNSSIESEDNLDKAVLNKQSQWHDLENPIVLKKGQAPVNNFSTDSRASINSSYLLDSAASNYSGTSHNEMFNSFHRSSVTSASIKSREAVLSAGNSSRRASIFLDQLSLHGDTDSEIPIDDLPPIELPYVVTSIISDCISRGDVQTAACVCSVFSYLTIDLPRIQLDDLLESYVDLLRRFGMFSEATLLINMSGSKNLKYIHSSSRDLIFEMENKKATGNEQSEKGKENAKTVTSLKKCVYCELPLRGVLVYPPVCGHIGHESCLRSWYFDNTDDALPVCPVPGCGVKLLDKRALI.

WD repeat units follow at residues 88–129 (TKHI…LLYD), 132–172 (EHSR…STIT), 175–215 (GNSE…LPFL), 219–258 (AHNGVVLCVNYSPNGVFLASCGRDKTIRIWDSTSNKKKSL), 262–309 (NNVS…IPYR), and 313–348 (CHDSIVSTMHWASTELLWSCSKDGIFSQTRVENAFN). Positions 541-560 (PREASTPSESSNSSIESEDN) are disordered. The span at 544–555 (ASTPSESSNSSI) shows a compositional bias: low complexity. A WD 7 repeat occupies 624-663 (FHRSSVTSASIKSREAVLSAGNSSRRASIFLDQLSLHGDT).

This is an uncharacterized protein from Schizosaccharomyces pombe (strain 972 / ATCC 24843) (Fission yeast).